Reading from the N-terminus, the 253-residue chain is DNA repair protein RecO (253 aa).

Belongs to the RecO family.

In terms of biological role, involved in DNA repair and RecF pathway recombination. This is DNA repair protein RecO from Staphylococcus epidermidis (strain ATCC 35984 / DSM 28319 / BCRC 17069 / CCUG 31568 / BM 3577 / RP62A).